Here is a 344-residue protein sequence, read N- to C-terminus: tRNA N6-adenosine threonylcarbamoyltransferase (344 aa).

H111 and H115 together coordinate Fe cation. Substrate contacts are provided by residues 136–140 (LVSGG), D169, G182, and N279. D307 serves as a coordination point for Fe cation.

The protein belongs to the KAE1 / TsaD family. The cofactor is Fe(2+).

It is found in the cytoplasm. The catalysed reaction is L-threonylcarbamoyladenylate + adenosine(37) in tRNA = N(6)-L-threonylcarbamoyladenosine(37) in tRNA + AMP + H(+). Its function is as follows. Required for the formation of a threonylcarbamoyl group on adenosine at position 37 (t(6)A37) in tRNAs that read codons beginning with adenine. Is involved in the transfer of the threonylcarbamoyl moiety of threonylcarbamoyl-AMP (TC-AMP) to the N6 group of A37, together with TsaE and TsaB. TsaD likely plays a direct catalytic role in this reaction. This Mannheimia succiniciproducens (strain KCTC 0769BP / MBEL55E) protein is tRNA N6-adenosine threonylcarbamoyltransferase.